The chain runs to 181 residues: Malignant T-cell-amplified sequence 2 (181 aa).

A PUA domain is found at 92–171; it reads LPHQQVDKGA…IGIENIHYLN (80 aa).

The protein belongs to the MCTS1 family.

It is found in the cytoplasm. The chain is Malignant T-cell-amplified sequence 2 from Homo sapiens (Human).